Consider the following 132-residue polypeptide: Fluoride-specific ion channel FluC 1 (132 aa).

The next 4 helical transmembrane spans lie at 11–31 (AVFA…ALAI), 37–57 (WPWP…YFTT), 70–92 (RPLL…VETI), and 105–125 (AYSV…TVLV). Na(+)-binding residues include Gly79 and Thr82.

Belongs to the fluoride channel Fluc/FEX (TC 1.A.43) family.

It is found in the cell membrane. It carries out the reaction fluoride(in) = fluoride(out). Na(+) is not transported, but it plays an essential structural role and its presence is essential for fluoride channel function. Its function is as follows. Fluoride-specific ion channel. Important for reducing fluoride concentration in the cell, thus reducing its toxicity. The protein is Fluoride-specific ion channel FluC 1 of Mycobacterium bovis (strain ATCC BAA-935 / AF2122/97).